The primary structure comprises 161 residues: 3-hydroxyacyl-[acyl-carrier-protein] dehydratase FabZ (161 aa).

His55 is a catalytic residue.

This sequence belongs to the thioester dehydratase family. FabZ subfamily.

It is found in the cytoplasm. The catalysed reaction is a (3R)-hydroxyacyl-[ACP] = a (2E)-enoyl-[ACP] + H2O. Its function is as follows. Involved in unsaturated fatty acids biosynthesis. Catalyzes the dehydration of short chain beta-hydroxyacyl-ACPs and long chain saturated and unsaturated beta-hydroxyacyl-ACPs. The protein is 3-hydroxyacyl-[acyl-carrier-protein] dehydratase FabZ of Jannaschia sp. (strain CCS1).